A 995-amino-acid chain; its full sequence is Putative pentatricopeptide repeat-containing protein At5g09950 (995 aa).

22 PPR repeats span residues aspartate 35–arginine 65, asparagine 66–serine 100, asparagine 101–valine 137, aspartate 138–lysine 169, asparagine 170–proline 204, threonine 205–threonine 241, aspartate 242–threonine 276, asparagine 278–methionine 303, serine 307–threonine 342, methionine 348–lysine 378, aspartate 379–proline 413, glycine 414–leucine 448, asparagine 449–serine 483, tryptophan 484–leucine 515, asparagine 516–aspartate 550, glutamate 551–arginine 581, aspartate 583–leucine 617, aspartate 618–serine 652, aspartate 653–arginine 683, asparagine 684–proline 718, aspartate 720–serine 750, and arginine 756–lysine 786. The segment at isoleucine 791–lysine 868 is type E motif. The type E(+) motif stretch occupies residues aspartate 869–arginine 899. A type DYW motif region spans residues aspartate 900–tryptophan 995.

Belongs to the PPR family. PCMP-H subfamily.

In Arabidopsis thaliana (Mouse-ear cress), this protein is Putative pentatricopeptide repeat-containing protein At5g09950 (PCMP-H35).